Here is a 96-residue protein sequence, read N- to C-terminus: UPF0235 protein CAB243 (96 aa).

This sequence belongs to the UPF0235 family.

This Chlamydia abortus (strain DSM 27085 / S26/3) (Chlamydophila abortus) protein is UPF0235 protein CAB243.